An 837-amino-acid chain; its full sequence is Outer membrane usher protein HifC (837 aa).

Positions 1–26 are cleaved as a signal peptide; sequence MKTKIFPLNKIAFACSLLLANPLAWA. Cys-813 and Cys-833 are joined by a disulfide.

Belongs to the fimbrial export usher family.

The protein localises to the cell outer membrane. Essential for piliation. This chain is Outer membrane usher protein HifC (hifC), found in Haemophilus influenzae.